Here is a 682-residue protein sequence, read N- to C-terminus: Potassium-transporting ATPase ATP-binding subunit (682 aa).

Transmembrane regions (helical) follow at residues valine 35–glycine 55, alanine 62–alanine 82, isoleucine 219–isoleucine 239, and valine 254–isoleucine 274. The 4-aspartylphosphate intermediate role is filled by aspartate 307. ATP-binding positions include aspartate 344, glutamate 348, phenylalanine 377–serine 384, and lysine 395. Mg(2+)-binding residues include aspartate 518 and aspartate 522. The next 3 helical transmembrane spans lie at phenylalanine 588 to methionine 608, alanine 616 to leucine 636, and isoleucine 656 to leucine 676.

This sequence belongs to the cation transport ATPase (P-type) (TC 3.A.3) family. Type IA subfamily. The system is composed of three essential subunits: KdpA, KdpB and KdpC.

The protein localises to the cell inner membrane. The catalysed reaction is K(+)(out) + ATP + H2O = K(+)(in) + ADP + phosphate + H(+). Functionally, part of the high-affinity ATP-driven potassium transport (or Kdp) system, which catalyzes the hydrolysis of ATP coupled with the electrogenic transport of potassium into the cytoplasm. This subunit is responsible for energy coupling to the transport system and for the release of the potassium ions to the cytoplasm. The sequence is that of Potassium-transporting ATPase ATP-binding subunit from Klebsiella pneumoniae subsp. pneumoniae (strain ATCC 700721 / MGH 78578).